A 208-amino-acid polypeptide reads, in one-letter code: Ciliary-associated calcium-binding coiled-coil protein 1 (208 aa).

Testis-specific. Expressed in spermatocytes and round spermatids (at protein level).

Its subcellular location is the cytoplasm. The protein localises to the cytoskeleton. It localises to the microtubule organizing center. The protein resides in the centrosome. It is found in the cell projection. Its subcellular location is the cilium. The protein localises to the flagellum. Its function is as follows. Calcium-binding protein. May be involved in the control of sperm flagellar movement. The chain is Ciliary-associated calcium-binding coiled-coil protein 1 from Mus musculus (Mouse).